Reading from the N-terminus, the 135-residue chain is NADH-quinone oxidoreductase subunit K (135 aa).

The next 3 helical transmembrane spans lie at 33 to 53 (VLGL…FAIG), 63 to 83 (FLFM…AFVV), and 95 to 115 (IMFI…LAIL).

This sequence belongs to the complex I subunit 4L family. As to quaternary structure, NDH-1 is composed of 14 different subunits. Subunits NuoA, H, J, K, L, M, N constitute the membrane sector of the complex.

It localises to the cell inner membrane. The enzyme catalyses a quinone + NADH + 5 H(+)(in) = a quinol + NAD(+) + 4 H(+)(out). In terms of biological role, NDH-1 shuttles electrons from NADH, via FMN and iron-sulfur (Fe-S) centers, to quinones in the respiratory chain. The immediate electron acceptor for the enzyme in this species is believed to be ubiquinone. Couples the redox reaction to proton translocation (for every two electrons transferred, four hydrogen ions are translocated across the cytoplasmic membrane), and thus conserves the redox energy in a proton gradient. This Psychrobacter cryohalolentis (strain ATCC BAA-1226 / DSM 17306 / VKM B-2378 / K5) protein is NADH-quinone oxidoreductase subunit K.